Reading from the N-terminus, the 238-residue chain is Lipoarabinomannan carrier protein LprG (238 aa).

Residues 1–26 (MQAPKHHRRLFAVLATLNTATAVIAG) form the signal peptide. Cys27 is lipidated: N-palmitoyl cysteine. A lipid anchor (S-diacylglycerol cysteine) is attached at Cys27.

It belongs to the LppX/LprAFG lipoprotein family. Modified by Lgt on Cys-27 with an S-linked diacylglyceral, signal peptide is removed by LspA, Cys-27 is further modifed with a fatty acid on its amino group by Lnt yielding a triacylated protein. Probably glycosylated, which is required for T-cell activation.

It localises to the cell inner membrane. The protein localises to the secreted. The protein resides in the cell wall. In terms of biological role, helps membrane protein ML0556 (P55) transport triacylglycerides (TAG) across the inner cell membrane into the periplasm and probably ultimately to the outer membrane. Binds TAG in its hydrophobic cavity and transfers it between lipid bilayers. TAG probably regulates lipid metabolism and growth regulation and plays a structural role in the outer membrane. Binds di- and triacylated phosphatidyl-myo-inositol mannosides (PIMs), and glycolipid lipoglycan modulins lipoarabinomannan (LAM) and lipomannan (LM), facilitating their recognition by TLR2. Required for activity of drug efflux transporter ML0556. Required, probably with ML0556, for normal surface localization of LAM. Functionally, constitutes a host TLR2 agonist (toll-like receptor) able to stimulate proliferation of CD4+ T-cells derived from a human leprosy patient following protein processing/presentation by MHC class II molecules in peripheral blood mononuclear cells. In Mycobacterium leprae (strain TN), this protein is Lipoarabinomannan carrier protein LprG.